The chain runs to 95 residues: Large ribosomal subunit protein bL25 (95 aa).

This sequence belongs to the bacterial ribosomal protein bL25 family. Part of the 50S ribosomal subunit; part of the 5S rRNA/L5/L18/L25 subcomplex. Contacts the 5S rRNA. Binds to the 5S rRNA independently of L5 and L18.

Its function is as follows. This is one of the proteins that binds to the 5S RNA in the ribosome where it forms part of the central protuberance. This chain is Large ribosomal subunit protein bL25, found in Shewanella halifaxensis (strain HAW-EB4).